A 720-amino-acid polypeptide reads, in one-letter code: Glutaryl-7-aminocephalosporanic-acid acylase (720 aa).

A signal peptide spans Met-1–Ala-29. Residues Asp-190–Gly-198 constitute a propeptide, spacer peptide. Ser-199 functions as the Nucleophile in the catalytic mechanism. Residues His-221 and Glu-653 contribute to the active site.

Belongs to the peptidase S45 family. In terms of assembly, heterotetramer of two alpha and two beta subunits processed from the same precursor.

Its subcellular location is the periplasm. It carries out the reaction (7R)-7-(4-carboxybutanamido)cephalosporanate + H2O = (7R)-7-aminocephalosporanate + glutarate. Catalyzes the deacylation of 7 beta-(4-carboxybutanamido)cephalosporanic acid (glutaryl-7-aminocephalosporanic acid or GL-7-ACA) to 7-aminocephalosporanic acid (7-ACA). This chain is Glutaryl-7-aminocephalosporanic-acid acylase, found in Pseudomonas sp. (strain SY-77).